We begin with the raw amino-acid sequence, 460 residues long: Elongation factor 1-alpha (460 aa).

At glycine 2 the chain carries N,N,N-trimethylglycine. Lysine 3 is modified (N6,N6-dimethyllysine; alternate). Lysine 3 is subject to N6-methyllysine; alternate. The tr-type G domain maps to 6–241 (KAHINVVVIG…DAIEQPKRPT (236 aa)). The tract at residues 15 to 22 (GHVDSGKS) is G1. Residue 15–22 (GHVDSGKS) coordinates GTP. Position 31 is an N6-methyllysine (lysine 31). The interval 71-75 (GITID) is G2. The residue at position 80 (lysine 80) is an N6,N6,N6-trimethyllysine. The interval 92–95 (DAPG) is G3. Residues 92–96 (DAPGH) and 154–157 (NKMD) each bind GTP. The segment at 154 to 157 (NKMD) is G4. The interval 193–195 (SGF) is G5. Lysine 317 is subject to N6,N6-dimethyllysine; alternate. Lysine 317 bears the N6-methyllysine; alternate mark. The residue at position 391 (lysine 391) is an N6-methyllysine.

This sequence belongs to the TRAFAC class translation factor GTPase superfamily. Classic translation factor GTPase family. EF-Tu/EF-1A subfamily.

It is found in the cytoplasm. This protein promotes the GTP-dependent binding of aminoacyl-tRNA to the A-site of ribosomes during protein biosynthesis. The chain is Elongation factor 1-alpha (TEF) from Sordaria macrospora.